The following is a 114-amino-acid chain: Lymphotactin (114 aa).

The signal sequence occupies residues 1-21; it reads MRLLLLTFLGVCCLTPWVVEG. Residues C32 and C69 are joined by a disulfide bond. Residues 92 to 114 form a disordered region; it reads KNMAETVPTGAQRSTSTAITLTG. Positions 100-114 are enriched in polar residues; sequence TGAQRSTSTAITLTG.

Belongs to the intercrine gamma family. As to expression, expressed in activated CD8(+) T cells. In the thymus, expressed by medullary thymic epithelial cells.

It is found in the secreted. Functionally, chemotactic activity for lymphocytes but not for monocytes or neutrophils. In thymus, mediates medullary accumulation of thymic dendritic cells and contributes to regulatoy T cell development, playing a role in self-tolerance establishment. In Mus musculus (Mouse), this protein is Lymphotactin (Xcl1).